The sequence spans 396 residues: Enoyl-[acyl-carrier-protein] reductase [NADH] (396 aa).

NAD(+)-binding positions include 47–52 (GASTGF), 73–74 (FE), 110–111 (DA), and 138–139 (LA). Tyr-224 contacts substrate. The active-site Proton donor is Tyr-234. Residues Lys-243 and 272–274 (LVT) contribute to the NAD(+) site.

The protein belongs to the TER reductase family. Monomer.

It catalyses the reaction a 2,3-saturated acyl-[ACP] + NAD(+) = a (2E)-enoyl-[ACP] + NADH + H(+). It functions in the pathway lipid metabolism; fatty acid biosynthesis. In terms of biological role, involved in the final reduction of the elongation cycle of fatty acid synthesis (FAS II). Catalyzes the reduction of a carbon-carbon double bond in an enoyl moiety that is covalently linked to an acyl carrier protein (ACP). This is Enoyl-[acyl-carrier-protein] reductase [NADH] from Flavobacterium psychrophilum (strain ATCC 49511 / DSM 21280 / CIP 103535 / JIP02/86).